The sequence spans 352 residues: C-C chemokine receptor type 5 (352 aa).

The Extracellular portion of the chain corresponds to Met1 to Ala30. Tyr3 carries the sulfotyrosine modification. O-linked (GalNAc...) serine glycans are attached at residues Ser6 and Ser7. 3 positions are modified to sulfotyrosine: Tyr10, Tyr14, and Tyr15. 2 disulfides stabilise this stretch: Cys20–Cys269 and Cys101–Cys178. Residues Arg31–Cys58 form a helical membrane-spanning segment. The Cytoplasmic portion of the chain corresponds to Lys59–Tyr68. A helical transmembrane segment spans residues Leu69–Tyr89. The Extracellular portion of the chain corresponds to Ala90–Gln102. Residues Leu103–Ile124 traverse the membrane as a helical segment. At Asp125 to Thr141 the chain is on the cytoplasmic side. A helical membrane pass occupies residues Val142–Phe166. Over Thr167–Ile198 the chain is Extracellular. The chain crosses the membrane as a helical span at residues Val199–Leu218. Topologically, residues Lys219 to Arg235 are cytoplasmic. Residues Leu236 to Phe260 traverse the membrane as a helical segment. Over Gln261–Gln277 the chain is Extracellular. A helical transmembrane segment spans residues Ala278 to Gly301. Topologically, residues Glu302–Leu352 are cytoplasmic. 3 S-palmitoyl cysteine lipidation sites follow: Cys321, Cys323, and Cys324. Phosphoserine; by BARK1 is present on residues Ser336, Ser337, Ser342, and Ser349.

The protein belongs to the G-protein coupled receptor 1 family. Interacts with PRAF2. Efficient ligand binding to CCL3/MIP-1alpha and CCL4/MIP-1beta requires sulfation, O-glycosylation and sialic acid modifications. Glycosylation on Ser-6 is required for efficient binding of CCL4. Interacts with GRK2. Interacts with ARRB1 and ARRB2. Interacts with CNIH4. Interacts with S100A4; this interaction stimulates T-lymphocyte chemotaxis. Sulfated on at least 2 of the N-terminal tyrosines. Sulfation is required for efficient binding of the chemokines, CCL3 and CCL4. Post-translationally, palmitoylation in the C-terminal is important for cell surface expression. In terms of processing, phosphorylation on serine residues in the C-terminal is stimulated by binding CC chemokines especially by APO-RANTES. O-glycosylated, but not N-glycosylated. Ser-6 appears to be the major site even if Ser-7 may be also O-glycosylated. Also sialylated glycans present which contribute to chemokine binding. Thr-16 and Ser-17 may also be glycosylated and, if so, with small moieties such as a T-antigen.

The protein localises to the cell membrane. Functionally, receptor for a number of inflammatory CC-chemokines including CCL3/MIP-1-alpha, CCL4/MIP-1-beta and RANTES and subsequently transduces a signal by increasing the intracellular calcium ion level. May play a role in the control of granulocytic lineage proliferation or differentiation. Participates in T-lymphocyte migration to the infection site by acting as a chemotactic receptor. This Cercocebus atys (Sooty mangabey) protein is C-C chemokine receptor type 5 (CCR5).